We begin with the raw amino-acid sequence, 109 residues long: Cell division protein ZapA (109 aa).

The stretch at P21–I100 forms a coiled coil.

This sequence belongs to the ZapA family. Type 1 subfamily. In terms of assembly, homodimer. Interacts with FtsZ.

It localises to the cytoplasm. Its function is as follows. Activator of cell division through the inhibition of FtsZ GTPase activity, therefore promoting FtsZ assembly into bundles of protofilaments necessary for the formation of the division Z ring. It is recruited early at mid-cell but it is not essential for cell division. In Shigella dysenteriae serotype 1 (strain Sd197), this protein is Cell division protein ZapA.